Consider the following 592-residue polypeptide: Condensin-2 complex subunit H2 (592 aa).

Disordered regions lie at residues 89 to 116 and 261 to 285; these read NKKR…DGCE and EAPS…PKQL. Residues 96–108 are compositionally biased toward polar residues; that stretch reads GSSSDGNQEQAPS.

This sequence belongs to the CND2 H2 (condensin-2 subunit 2) family. Component of the condensin-2 complex, which contains the smc2 and smc4 heterodimer, and three non SMC subunits, ncapg2, ncaph2 and ncapd3 that probably regulate the complex.

The protein localises to the nucleus. Functionally, regulatory subunit of the condensin-2 complex, a complex that seems to provide chromosomes with an additional level of organization and rigidity and in establishing mitotic chromosome architecture. In Danio rerio (Zebrafish), this protein is Condensin-2 complex subunit H2 (ncaph2).